The chain runs to 242 residues: Putative prolyl 4-hydroxylase (242 aa).

Residues 128–238 enclose the Fe2OG dioxygenase domain; it reads NAEDLQVVRY…KWIANLWFRE (111 aa).

Belongs to the P4HA family. Fe cation is required as a cofactor. Requires L-ascorbate as cofactor.

Its subcellular location is the virion. The enzyme catalyses L-prolyl-[collagen] + 2-oxoglutarate + O2 = trans-4-hydroxy-L-prolyl-[collagen] + succinate + CO2. Its function is as follows. May catalyze the post-translational formation of 4-hydroxyproline in -Xaa-Pro-Gly- sequences in the 6 collagen-like proteins of Mimivirus. The sequence is that of Putative prolyl 4-hydroxylase from Acanthamoeba polyphaga mimivirus (APMV).